A 591-amino-acid polypeptide reads, in one-letter code: Aspartate--tRNA(Asp/Asn) ligase (591 aa).

Glu175 is a binding site for L-aspartate. The aspartate stretch occupies residues 199 to 202; that stretch reads QQFK. 2 residues coordinate L-aspartate: Arg221 and His453. 221–223 serves as a coordination point for ATP; that stretch reads RDE. Glu486 serves as a coordination point for ATP. Arg493 is an L-aspartate binding site. 538-541 lines the ATP pocket; that stretch reads GIDR.

This sequence belongs to the class-II aminoacyl-tRNA synthetase family. Type 1 subfamily. As to quaternary structure, homodimer.

The protein localises to the cytoplasm. The catalysed reaction is tRNA(Asx) + L-aspartate + ATP = L-aspartyl-tRNA(Asx) + AMP + diphosphate. Its function is as follows. Aspartyl-tRNA synthetase with relaxed tRNA specificity since it is able to aspartylate not only its cognate tRNA(Asp) but also tRNA(Asn). Reaction proceeds in two steps: L-aspartate is first activated by ATP to form Asp-AMP and then transferred to the acceptor end of tRNA(Asp/Asn). The sequence is that of Aspartate--tRNA(Asp/Asn) ligase from Cereibacter sphaeroides (strain KD131 / KCTC 12085) (Rhodobacter sphaeroides).